A 257-amino-acid polypeptide reads, in one-letter code: Non-homologous end joining protein Ku (257 aa).

The Ku domain maps to 9–184; it reads TFGMVAIPIG…YTKPEVNEQE (176 aa).

This sequence belongs to the prokaryotic Ku family. Homodimer. Interacts with LigD.

In terms of biological role, with LigD forms a non-homologous end joining (NHEJ) DNA repair enzyme, which repairs dsDNA breaks with reduced fidelity. Binds linear dsDNA with 5'- and 3'- overhangs but not closed circular dsDNA nor ssDNA. Recruits and stimulates the ligase activity of LigD. This is Non-homologous end joining protein Ku from Lachnoclostridium phytofermentans (strain ATCC 700394 / DSM 18823 / ISDg) (Clostridium phytofermentans).